Here is a 2179-residue protein sequence, read N- to C-terminus: Genome polyprotein (2179 aa).

Disordered regions lie at residues 503–531, 623–678, 703–738, and 753–847; these read FSKD…PTGD, QPQK…YPIQ, RAKK…GDQF, and EPSV…PPKM. Polar residues-rich tracts occupy residues 630–642 and 659–678; these read DTPS…QPFH and TTFA…YPIQ. The span at 758-770 shows a compositional bias: polar residues; sequence SEDTSSQSYISTE. The segment covering 783–806 has biased composition (low complexity); that stretch reads SEESTQLSQLSSSSNDSPENNENT. The segment covering 819–831 has biased composition (acidic residues); that stretch reads EISEVEDEVDGMT. A CCHC-type zinc finger spans residues 1112-1125; that stretch reads CFTCGKIGHFSRNC. Catalysis depends on Asp1226, which acts as the For protease activity; shared with dimeric partner. Residues 1409-1591 form the Reverse transcriptase domain; the sequence is QQFDLIEPSD…NKIQFLGMDF (183 aa). Asp1479, Asp1542, and Asp1543 together coordinate Mg(2+). Disordered regions lie at residues 1822–1848, 2114–2144, and 2160–2179; these read QRRT…KLSH, NIVK…KNKC, and YSTK…EPCV. Residues 1827 to 1840 are compositionally biased toward low complexity; sequence SSSTKSKADSSQST. Residues 2120 to 2144 are compositionally biased toward basic residues; the sequence is PRKRKGKAKSRSSTRSEKRRAKNKC. Positions 2162–2179 are enriched in polar residues; that stretch reads TKPSTPSWTQDSSSEPCV.

This sequence belongs to the Petuviruses genome polyprotein family.

It carries out the reaction DNA(n) + a 2'-deoxyribonucleoside 5'-triphosphate = DNA(n+1) + diphosphate. In terms of biological role, encodes presumably for at least four polypeptides: Movement protein (MP), capsid protein (CP), Protease (PR), and reverse transcriptase (RT). This Petunia vein clearing virus (isolate Shepherd) (PVCV) protein is Genome polyprotein.